Consider the following 350-residue polypeptide: Ubiquitin carboxyl-terminal hydrolase 11 (350 aa).

The USP domain maps to 49–344 (KGLYNVSGND…SACLLFYEME (296 aa)). Cys59 (nucleophile) is an active-site residue. The active-site Proton acceptor is the His302.

Belongs to the peptidase C19 family.

The enzyme catalyses Thiol-dependent hydrolysis of ester, thioester, amide, peptide and isopeptide bonds formed by the C-terminal Gly of ubiquitin (a 76-residue protein attached to proteins as an intracellular targeting signal).. This Schizosaccharomyces pombe (strain 972 / ATCC 24843) (Fission yeast) protein is Ubiquitin carboxyl-terminal hydrolase 11 (ubp11).